A 123-amino-acid polypeptide reads, in one-letter code: ATP synthase epsilon chain (123 aa).

The protein belongs to the ATPase epsilon chain family. As to quaternary structure, F-type ATPases have 2 components, CF(1) - the catalytic core - and CF(0) - the membrane proton channel. CF(1) has five subunits: alpha(3), beta(3), gamma(1), delta(1), epsilon(1). CF(0) has three main subunits: a, b and c.

The protein resides in the cell inner membrane. Its function is as follows. Produces ATP from ADP in the presence of a proton gradient across the membrane. The protein is ATP synthase epsilon chain of Helicobacter pylori (strain HPAG1).